Reading from the N-terminus, the 190-residue chain is Orotate phosphoribosyltransferase (190 aa).

A 5-phospho-alpha-D-ribose 1-diphosphate-binding site is contributed by 114 to 122 (EDVITTGGS). Residues Thr-118 and Arg-146 each contribute to the orotate site.

This sequence belongs to the purine/pyrimidine phosphoribosyltransferase family. PyrE subfamily. Homodimer. It depends on Mg(2+) as a cofactor.

The enzyme catalyses orotidine 5'-phosphate + diphosphate = orotate + 5-phospho-alpha-D-ribose 1-diphosphate. Its pathway is pyrimidine metabolism; UMP biosynthesis via de novo pathway; UMP from orotate: step 1/2. Catalyzes the transfer of a ribosyl phosphate group from 5-phosphoribose 1-diphosphate to orotate, leading to the formation of orotidine monophosphate (OMP). The polypeptide is Orotate phosphoribosyltransferase (Caldicellulosiruptor bescii (strain ATCC BAA-1888 / DSM 6725 / KCTC 15123 / Z-1320) (Anaerocellum thermophilum)).